The primary structure comprises 201 residues: Alpha-1-acid glycoprotein (201 aa).

The first 18 residues, 1–18, serve as a signal peptide directing secretion; it reads MALPWALAVLSLLPLLHA. Asn-25, Asn-33, Asn-87, Asn-93, Asn-103, and Asn-169 each carry an N-linked (GlcNAc...) asparagine glycan. Cys-90 and Cys-183 are disulfide-bonded.

It belongs to the calycin superfamily. Lipocalin family.

The protein resides in the secreted. Functions as a transport protein in the blood stream. Binds various ligands in the interior of its beta-barrel domain. Appears to function in modulating the activity of the immune system during the acute-phase reaction. This Oryctolagus cuniculus (Rabbit) protein is Alpha-1-acid glycoprotein (ORM1).